A 258-amino-acid polypeptide reads, in one-letter code: Hydroxyacylglutathione hydrolase (258 aa).

The Zn(2+) site is built by H56, H58, D60, H61, H112, D132, and H170.

Belongs to the metallo-beta-lactamase superfamily. Glyoxalase II family. In terms of assembly, monomer. The cofactor is Zn(2+).

The catalysed reaction is an S-(2-hydroxyacyl)glutathione + H2O = a 2-hydroxy carboxylate + glutathione + H(+). It functions in the pathway secondary metabolite metabolism; methylglyoxal degradation; (R)-lactate from methylglyoxal: step 2/2. Functionally, thiolesterase that catalyzes the hydrolysis of S-D-lactoyl-glutathione to form glutathione and D-lactic acid. The sequence is that of Hydroxyacylglutathione hydrolase from Pseudomonas aeruginosa (strain LESB58).